Here is a 234-residue protein sequence, read N- to C-terminus: Putative ankyrin repeat protein RF_0063 (234 aa).

ANK repeat units follow at residues 149–180 and 184–213; these read NNNT…TISI and YNNT…QKAL.

In Rickettsia felis (strain ATCC VR-1525 / URRWXCal2) (Rickettsia azadi), this protein is Putative ankyrin repeat protein RF_0063.